Here is a 427-residue protein sequence, read N- to C-terminus: 3-isopropylmalate dehydratase large subunit (427 aa).

Residues Cys-308, Cys-368, and Cys-371 each contribute to the [4Fe-4S] cluster site.

Belongs to the aconitase/IPM isomerase family. LeuC type 2 subfamily. Heterodimer of LeuC and LeuD. The cofactor is [4Fe-4S] cluster.

It catalyses the reaction (2R,3S)-3-isopropylmalate = (2S)-2-isopropylmalate. It participates in amino-acid biosynthesis; L-leucine biosynthesis; L-leucine from 3-methyl-2-oxobutanoate: step 2/4. Its function is as follows. Catalyzes the isomerization between 2-isopropylmalate and 3-isopropylmalate, via the formation of 2-isopropylmaleate. This is 3-isopropylmalate dehydratase large subunit from Geotalea uraniireducens (strain Rf4) (Geobacter uraniireducens).